The sequence spans 160 residues: SUMO-conjugating enzyme SCE1 (160 aa).

At A2 the chain carries N-acetylalanine. One can recognise a UBC core domain in the interval 5–158 (IARGRLAEER…VKLQSKQYPA (154 aa)). The Glycyl thioester intermediate role is filled by C94.

It belongs to the ubiquitin-conjugating enzyme family. Interacts with SIZ1 (via PHD domain) and MMS21. Interacts with TCP14 and TCP15. Interacts with KIN10.

Its pathway is protein modification; protein sumoylation. Its function is as follows. SUMO-conjugating enzyme that accepts the SUMO proteins from the E1 SUMO-activating heterodimer SAE1/SAE2 and catalyzes its covalent attachment to other proteins with the E3 SUMO ligases SIZ1 and MMS21. Associates with SIZ1 for sumoylation of the transcription factor GTE3. The chain is SUMO-conjugating enzyme SCE1 (SCE1) from Arabidopsis thaliana (Mouse-ear cress).